Reading from the N-terminus, the 162-residue chain is Peptide methionine sulfoxide reductase MsrA (162 aa).

Residue C16 is part of the active site.

It belongs to the MsrA Met sulfoxide reductase family.

The catalysed reaction is L-methionyl-[protein] + [thioredoxin]-disulfide + H2O = L-methionyl-(S)-S-oxide-[protein] + [thioredoxin]-dithiol. The enzyme catalyses [thioredoxin]-disulfide + L-methionine + H2O = L-methionine (S)-S-oxide + [thioredoxin]-dithiol. Its function is as follows. Has an important function as a repair enzyme for proteins that have been inactivated by oxidation. Catalyzes the reversible oxidation-reduction of methionine sulfoxide in proteins to methionine. The sequence is that of Peptide methionine sulfoxide reductase MsrA from Geobacter metallireducens (strain ATCC 53774 / DSM 7210 / GS-15).